A 293-amino-acid polypeptide reads, in one-letter code: MPWIQLRLSANEDNAEKYSDWLSACGSQAVTFIDAKDTPIYEPLPGDEVIYWSNTVVMGLFEASHDMDKVISYLQSIHPDKEQMRYKLEQLEDKDWEREWMDNFHPMKFGERLWVCPSWRDVPDPEAVNVMLDPGLAFGTGTHPTTALCLTWLDGLDLQDKTVVDFGCGSGILSLAALKLGAKKVIGIDIDPQALQASLANAERNNVSDRLELYLPKDQPEFKADVVVANILAGPLRELAPVIIEYVGDKGLLALSGVLEEQAQTLQTIYGQWCDMEPVSVQEEWVRLNGQRK.

S-adenosyl-L-methionine is bound by residues T146, G167, D189, and N230.

Belongs to the methyltransferase superfamily. PrmA family.

The protein localises to the cytoplasm. The enzyme catalyses L-lysyl-[protein] + 3 S-adenosyl-L-methionine = N(6),N(6),N(6)-trimethyl-L-lysyl-[protein] + 3 S-adenosyl-L-homocysteine + 3 H(+). Methylates ribosomal protein L11. This chain is Ribosomal protein L11 methyltransferase, found in Colwellia psychrerythraea (strain 34H / ATCC BAA-681) (Vibrio psychroerythus).